We begin with the raw amino-acid sequence, 719 residues long: B3 domain-containing protein Os03g0120900 (719 aa).

A DNA-binding region (TF-B3) is located at residues 7–110; sequence HHHFIKVMVG…HFMVLPFGLN (104 aa). Disordered stretches follow at residues 328 to 381 and 412 to 443; these read RGSF…RSEQ and EEPQ…RNAV. Positions 351–366 are enriched in basic and acidic residues; sequence DSAENTLKERSEERQP. Positions 416–430 are enriched in polar residues; sequence HNQGENEGNLDQVNN.

It localises to the nucleus. The chain is B3 domain-containing protein Os03g0120900 from Oryza sativa subsp. japonica (Rice).